A 306-amino-acid chain; its full sequence is Acetyl-coenzyme A carboxylase carboxyl transferase subunit beta (306 aa).

The region spanning 25–294 (LWIKDPTSGE…APEPSHAFSK (270 aa)) is the CoA carboxyltransferase N-terminal domain. The interval 287–306 (EPSHAFSKDSQTQISKTKAA) is disordered. The segment covering 294–306 (KDSQTQISKTKAA) has biased composition (polar residues).

Belongs to the AccD/PCCB family. In terms of assembly, acetyl-CoA carboxylase is a heterohexamer composed of biotin carboxyl carrier protein (AccB), biotin carboxylase (AccC) and two subunits each of ACCase subunit alpha (AccA) and ACCase subunit beta (AccD).

Its subcellular location is the cytoplasm. The catalysed reaction is N(6)-carboxybiotinyl-L-lysyl-[protein] + acetyl-CoA = N(6)-biotinyl-L-lysyl-[protein] + malonyl-CoA. The protein operates within lipid metabolism; malonyl-CoA biosynthesis; malonyl-CoA from acetyl-CoA: step 1/1. Its function is as follows. Component of the acetyl coenzyme A carboxylase (ACC) complex. Biotin carboxylase (BC) catalyzes the carboxylation of biotin on its carrier protein (BCCP) and then the CO(2) group is transferred by the transcarboxylase to acetyl-CoA to form malonyl-CoA. The sequence is that of Acetyl-coenzyme A carboxylase carboxyl transferase subunit beta from Bartonella bacilliformis (strain ATCC 35685 / KC583 / Herrer 020/F12,63).